Reading from the N-terminus, the 126-residue chain is Large ribosomal subunit protein bL12 (126 aa).

This sequence belongs to the bacterial ribosomal protein bL12 family. As to quaternary structure, homodimer. Part of the ribosomal stalk of the 50S ribosomal subunit. Forms a multimeric L10(L12)X complex, where L10 forms an elongated spine to which 2 to 4 L12 dimers bind in a sequential fashion. Binds GTP-bound translation factors.

Forms part of the ribosomal stalk which helps the ribosome interact with GTP-bound translation factors. Is thus essential for accurate translation. The polypeptide is Large ribosomal subunit protein bL12 (Desulfatibacillum aliphaticivorans).